The following is a 251-amino-acid chain: 3-deoxy-manno-octulosonate cytidylyltransferase (251 aa).

The protein belongs to the KdsB family.

It is found in the cytoplasm. It catalyses the reaction 3-deoxy-alpha-D-manno-oct-2-ulosonate + CTP = CMP-3-deoxy-beta-D-manno-octulosonate + diphosphate. The protein operates within nucleotide-sugar biosynthesis; CMP-3-deoxy-D-manno-octulosonate biosynthesis; CMP-3-deoxy-D-manno-octulosonate from 3-deoxy-D-manno-octulosonate and CTP: step 1/1. Its pathway is bacterial outer membrane biogenesis; lipopolysaccharide biosynthesis. In terms of biological role, activates KDO (a required 8-carbon sugar) for incorporation into bacterial lipopolysaccharide in Gram-negative bacteria. In Geotalea uraniireducens (strain Rf4) (Geobacter uraniireducens), this protein is 3-deoxy-manno-octulosonate cytidylyltransferase.